The sequence spans 157 residues: Ribonuclease H (157 aa).

In terms of domain architecture, RNase H type-1 spans 1 to 142; sequence MKKKIKIFID…CDFLAKISAK (142 aa). Positions 10, 48, 70, and 134 each coordinate Mg(2+).

Belongs to the RNase H family. In terms of assembly, monomer. Mg(2+) is required as a cofactor.

Its subcellular location is the cytoplasm. The catalysed reaction is Endonucleolytic cleavage to 5'-phosphomonoester.. Its function is as follows. Endonuclease that specifically degrades the RNA of RNA-DNA hybrids. The protein is Ribonuclease H of Wigglesworthia glossinidia brevipalpis.